Consider the following 79-residue polypeptide: D-alanyl carrier protein (79 aa).

The region spanning 1-77 (MDVKAEVIEI…KIVEGVTELR (77 aa)) is the Carrier domain. O-(pantetheine 4'-phosphoryl)serine is present on S35.

Belongs to the DltC family. In terms of processing, 4'-phosphopantetheine is transferred from CoA to a specific serine of apo-DCP.

Its subcellular location is the cytoplasm. The protein operates within cell wall biogenesis; lipoteichoic acid biosynthesis. Functionally, carrier protein involved in the D-alanylation of lipoteichoic acid (LTA). The loading of thioester-linked D-alanine onto DltC is catalyzed by D-alanine--D-alanyl carrier protein ligase DltA. The DltC-carried D-alanyl group is further transferred to cell membrane phosphatidylglycerol (PG) by forming an ester bond, probably catalyzed by DltD. D-alanylation of LTA plays an important role in modulating the properties of the cell wall in Gram-positive bacteria, influencing the net charge of the cell wall. The polypeptide is D-alanyl carrier protein (Streptococcus gordonii (strain Challis / ATCC 35105 / BCRC 15272 / CH1 / DL1 / V288)).